A 372-amino-acid chain; its full sequence is Aminomethyltransferase (372 aa).

This sequence belongs to the GcvT family. In terms of assembly, the glycine cleavage system is composed of four proteins: P, T, L and H.

It carries out the reaction N(6)-[(R)-S(8)-aminomethyldihydrolipoyl]-L-lysyl-[protein] + (6S)-5,6,7,8-tetrahydrofolate = N(6)-[(R)-dihydrolipoyl]-L-lysyl-[protein] + (6R)-5,10-methylene-5,6,7,8-tetrahydrofolate + NH4(+). The glycine cleavage system catalyzes the degradation of glycine. This is Aminomethyltransferase from Burkholderia ambifaria (strain MC40-6).